The following is a 252-amino-acid chain: Chitooligosaccharide deacetylase (252 aa).

H125 serves as a coordination point for Mg(2+).

The protein belongs to the YdjC deacetylase family. ChbG subfamily. Homodimer. Requires Mg(2+) as cofactor.

It localises to the cytoplasm. It carries out the reaction N,N'-diacetylchitobiose + H2O = N-acetyl-beta-D-glucosaminyl-(1-&gt;4)-D-glucosamine + acetate. It catalyses the reaction diacetylchitobiose-6'-phosphate + H2O = N'-monoacetylchitobiose-6'-phosphate + acetate. Its pathway is glycan degradation; chitin degradation. In terms of biological role, involved in the degradation of chitin. ChbG is essential for growth on the acetylated chitooligosaccharides chitobiose and chitotriose but is dispensable for growth on cellobiose and chitosan dimer, the deacetylated form of chitobiose. Deacetylation of chitobiose-6-P and chitotriose-6-P is necessary for both the activation of the chb promoter by the regulatory protein ChbR and the hydrolysis of phosphorylated beta-glucosides by the phospho-beta-glucosidase ChbF. Catalyzes the removal of only one acetyl group from chitobiose-6-P to yield monoacetylchitobiose-6-P, the inducer of ChbR and the substrate of ChbF. The polypeptide is Chitooligosaccharide deacetylase (Escherichia coli O157:H7).